Reading from the N-terminus, the 645-residue chain is Zinc finger and SCAN domain-containing protein 2 (645 aa).

Disordered regions lie at residues 1–25 (MMAAEIPRVTTPLSPLVQVPQEEDR), 37–75 (DDSWVQEAVLQEDGPESEPFPQSAGKGSPQEEVTRGPQG), and 193–230 (EMPEGESAQHSDGESDFERDAGIQRPQGHTPGKDHGEV). Residues 59 to 132 (SAGKGSPQEE…ALVEDLTQTL (74 aa)) enclose the SCAN box domain. Basic and acidic residues predominate over residues 199–214 (SAQHSDGESDFERDAG). 14 consecutive C2H2-type zinc fingers follow at residues 253–275 (YECPQCGKTFSRKSHLITHERTH), 281–303 (YKCDECGKSFSDGSNFSRHQTTH), 309–331 (YKCRDCGKSFSRSANLITHQRIH), 337–359 (FQCAECGKSFSRSPNLIAHQRTH), 365–387 (YSCPECGKSFGNRSSLNTHQGIH), 393–415 (YECKECGESFSYNSNLIRHQRIH), 421–443 (YKCTDCGQRFSQSSALITHRRTH), 449–471 (YQCSECGKNFSRSSNLATHRRTH), 477–499 (YKCGVCGKSFSQSSSLIAHQGMH), 505–527 (YECLTCGESFSWSSNLLKHQRIH), 533–555 (YKCSECGKCFSQRSQLVVHQQTH), 561–583 (YKCLMCGKSFSRGSILVMHQRAH), 589–611 (YRCPECGKGFSWNSVLIIHQRIH), and 617–639 (YKCPECGKGFSNSSNFITHQRTH).

Belongs to the krueppel C2H2-type zinc-finger protein family.

The protein resides in the nucleus. May be involved in transcriptional regulation during the post-meiotic stages of spermatogenesis. The chain is Zinc finger and SCAN domain-containing protein 2 (ZSCAN2) from Pongo abelii (Sumatran orangutan).